The primary structure comprises 390 residues: Neuromedin-B receptor (390 aa).

Residues 1–19 (MPSKSLSNLSVTTGANESG) show a composition bias toward polar residues. The interval 1–22 (MPSKSLSNLSVTTGANESGSVP) is disordered. Residues 1–41 (MPSKSLSNLSVTTGANESGSVPEGWERDFLPASDGTTTELV) lie on the Extracellular side of the membrane. 2 N-linked (GlcNAc...) asparagine glycosylation sites follow: Asn8 and Asn16. Residues 42-65 (IRCVIPSLYLLIITVGLLGNIMLV) form a helical membrane-spanning segment. The Cytoplasmic segment spans residues 66-79 (KIFITNSAMRSVPN). A helical transmembrane segment spans residues 80–99 (IFISNLAAGDLLLLLTCVPV). Topologically, residues 100–117 (DASRYFFDEWMFGKVGCK) are extracellular. A disulfide bridge connects residues Cys116 and Cys198. The chain crosses the membrane as a helical span at residues 118 to 139 (LIPVIQLTSVGVSVFTLTALSA). Residues 140–156 (DRYRAIVNPMDMQTSGA) lie on the Cytoplasmic side of the membrane. A helical transmembrane segment spans residues 157 to 177 (LLRTCVKAMGIWVVSVLLAVP). Residues 178 to 211 (EAVFSEVARISSLDNSSFTACIPYPQTDELHPKI) are Extracellular-facing. N-linked (GlcNAc...) asparagine glycosylation occurs at Asn192. A helical transmembrane segment spans residues 212-235 (HSVLIFLVYFLIPLAIISIYYYHI). The Cytoplasmic portion of the chain corresponds to 236-266 (AKTLIKSAHNLPGEYNEHTKKQMETRKRLAK). A helical membrane pass occupies residues 267-287 (IVLVFVGCFIFCWFPNHILYM). At 288–299 (YRSFNYNEIDPS) the chain is on the extracellular side. A helical transmembrane segment spans residues 300-327 (LGHMIVTLVARVLSFGNSCVNPFALYLL). At 328–390 (SESFRRHFNS…GHSMKQEMAL (63 aa)) the chain is on the cytoplasmic side. Residue Cys341 is the site of S-palmitoyl cysteine attachment. At Ser352 the chain carries Phosphoserine.

It belongs to the G-protein coupled receptor 1 family. As to expression, expressed in epididymis (at protein level).

It is found in the cell membrane. Its function is as follows. Receptor for neuromedin-B. Contributes to the maintenance of basal sigh rate through signaling in the pre-Botzinger complex, a cluster of several thousand neurons in the ventrolateral medulla responsible for inspiration during respiratory activity. Contributes to the induction of sneezing following exposure to chemical irritants or allergens which causes release of NMB by nasal sensory neurons and activation of NMBR-expressing neurons in the sneeze-evoking region of the brainstem. These in turn activate neurons of the caudal ventral respiratory group, giving rise to the sneezing response. Contributes to induction of acute itch, possibly through its activation on dorsal root ganglion neurons by the NMB peptide. Plays a role in the innate immune response to influenza A virus infection by enhancing interferon alpha expression and reducing expression of IL6. Plays a role in CSF1-induced proliferation of osteoclast precursors by contributing to the positive regulation of the expression of the CSF1 receptor CSF1R. The sequence is that of Neuromedin-B receptor (NMBR) from Homo sapiens (Human).